A 355-amino-acid chain; its full sequence is 3-dehydroquinate synthase (355 aa).

Residues 106–110, 130–131, Lys-143, and Lys-152 each bind NAD(+); these read GVVGD and TS. Glu-185, His-246, and His-262 together coordinate Zn(2+).

The protein belongs to the sugar phosphate cyclases superfamily. Dehydroquinate synthase family. It depends on Co(2+) as a cofactor. Zn(2+) serves as cofactor. Requires NAD(+) as cofactor.

Its subcellular location is the cytoplasm. It carries out the reaction 7-phospho-2-dehydro-3-deoxy-D-arabino-heptonate = 3-dehydroquinate + phosphate. It participates in metabolic intermediate biosynthesis; chorismate biosynthesis; chorismate from D-erythrose 4-phosphate and phosphoenolpyruvate: step 2/7. Functionally, catalyzes the conversion of 3-deoxy-D-arabino-heptulosonate 7-phosphate (DAHP) to dehydroquinate (DHQ). This is 3-dehydroquinate synthase from Latilactobacillus sakei subsp. sakei (strain 23K) (Lactobacillus sakei subsp. sakei).